Consider the following 420-residue polypeptide: Putative T-box protein 33 (420 aa).

The T-box DNA-binding region spans 93–291; the sequence is LWKELHYLSN…ANPTSRGDAK (199 aa). A compositionally biased stretch (polar residues) spans 395 to 412; it reads SPPLQPTATSPEASQNQI. A disordered region spans residues 395-420; that stretch reads SPPLQPTATSPEASQNQIKLEMNQYM.

The protein localises to the nucleus. This Caenorhabditis elegans protein is Putative T-box protein 33 (tbx-33).